A 200-amino-acid polypeptide reads, in one-letter code: Dephospho-CoA kinase (200 aa).

Residues 4–200 (VIGLTGGIAS…AILKKWNIID (197 aa)) form the DPCK domain. An ATP-binding site is contributed by 12–17 (ASGKST).

Belongs to the CoaE family.

Its subcellular location is the cytoplasm. The catalysed reaction is 3'-dephospho-CoA + ATP = ADP + CoA + H(+). It functions in the pathway cofactor biosynthesis; coenzyme A biosynthesis; CoA from (R)-pantothenate: step 5/5. Functionally, catalyzes the phosphorylation of the 3'-hydroxyl group of dephosphocoenzyme A to form coenzyme A. This chain is Dephospho-CoA kinase, found in Bacillus anthracis.